The following is a 45-amino-acid chain: uncharacterized protein (45 aa).

The signal sequence occupies residues 1–19 (MTFQILFLFVFHFVYIFRA).

This is an uncharacterized protein from Saccharomyces cerevisiae (strain ATCC 204508 / S288c) (Baker's yeast).